A 207-amino-acid chain; its full sequence is Outer-membrane lipoprotein LolB (207 aa).

A signal peptide spans 1–21 (MPQPDFRLIRLLPLAALVLTA). Cysteine 22 carries N-palmitoyl cysteine lipidation. Cysteine 22 carries the S-diacylglycerol cysteine lipid modification.

This sequence belongs to the LolB family. In terms of assembly, monomer.

It localises to the cell outer membrane. Plays a critical role in the incorporation of lipoproteins in the outer membrane after they are released by the LolA protein. This chain is Outer-membrane lipoprotein LolB, found in Shigella sonnei (strain Ss046).